The following is a 313-amino-acid chain: MMENFKHTTVLLDEAVNGLNIRPDGIYIDGTFGRGGHSRLILSQLGEEGRLLAIDRDPQAIAVAQTINDPRFSIIHGPFSALADYVAERELTGKIDGILLDLGVSSPQLDDAERGFSFMRDGPLDMRMDPTRGQSAAEWLQTAEEADIAWVLKTFGEERFAKRIAHAIVERNREQPMTRTKELAEVVAAATPVKDKFKHPATRTFQAVRIWVNSELEEIEQALKSSLSVLASGGRLSIISFHSLEDRIVKRFMREQSRGPQVPAGLPMTEAQLKKLGGRELRALGKLMPGEKEVAENPRARSSVLRIAERTNA.

S-adenosyl-L-methionine-binding positions include 35-37 (GGH), D55, F79, D101, and Q108.

It belongs to the methyltransferase superfamily. RsmH family.

Its subcellular location is the cytoplasm. The enzyme catalyses cytidine(1402) in 16S rRNA + S-adenosyl-L-methionine = N(4)-methylcytidine(1402) in 16S rRNA + S-adenosyl-L-homocysteine + H(+). Its function is as follows. Specifically methylates the N4 position of cytidine in position 1402 (C1402) of 16S rRNA. The chain is Ribosomal RNA small subunit methyltransferase H from Salmonella typhi.